Reading from the N-terminus, the 359-residue chain is Dual-specificity RNA methyltransferase RlmN 1 (359 aa).

Glu96 acts as the Proton acceptor in catalysis. The Radical SAM core domain maps to 102–335 (FKGRATVCIS…STVRQRRGID (234 aa)). A disulfide bond links Cys109 and Cys340. [4Fe-4S] cluster contacts are provided by Cys116, Cys120, and Cys123. S-adenosyl-L-methionine contacts are provided by residues 166-167 (GE), Ser198, 221-223 (SLH), and Asn297. Cys340 acts as the S-methylcysteine intermediate in catalysis.

The protein belongs to the radical SAM superfamily. RlmN family. It depends on [4Fe-4S] cluster as a cofactor.

Its subcellular location is the cytoplasm. It catalyses the reaction adenosine(2503) in 23S rRNA + 2 reduced [2Fe-2S]-[ferredoxin] + 2 S-adenosyl-L-methionine = 2-methyladenosine(2503) in 23S rRNA + 5'-deoxyadenosine + L-methionine + 2 oxidized [2Fe-2S]-[ferredoxin] + S-adenosyl-L-homocysteine. It carries out the reaction adenosine(37) in tRNA + 2 reduced [2Fe-2S]-[ferredoxin] + 2 S-adenosyl-L-methionine = 2-methyladenosine(37) in tRNA + 5'-deoxyadenosine + L-methionine + 2 oxidized [2Fe-2S]-[ferredoxin] + S-adenosyl-L-homocysteine. Specifically methylates position 2 of adenine 2503 in 23S rRNA and position 2 of adenine 37 in tRNAs. m2A2503 modification seems to play a crucial role in the proofreading step occurring at the peptidyl transferase center and thus would serve to optimize ribosomal fidelity. The chain is Dual-specificity RNA methyltransferase RlmN 1 from Myxococcus xanthus (strain DK1622).